Here is a 181-residue protein sequence, read N- to C-terminus: Adenine phosphoribosyltransferase (181 aa).

It belongs to the purine/pyrimidine phosphoribosyltransferase family. As to quaternary structure, homodimer.

The protein resides in the cytoplasm. The enzyme catalyses AMP + diphosphate = 5-phospho-alpha-D-ribose 1-diphosphate + adenine. It participates in purine metabolism; AMP biosynthesis via salvage pathway; AMP from adenine: step 1/1. Functionally, catalyzes a salvage reaction resulting in the formation of AMP, that is energically less costly than de novo synthesis. The sequence is that of Adenine phosphoribosyltransferase from Vibrio atlanticus (strain LGP32) (Vibrio splendidus (strain Mel32)).